The sequence spans 474 residues: Ribulose bisphosphate carboxylase large chain (474 aa).

Asn-123 and Thr-173 together coordinate substrate. Residue Lys-175 is the Proton acceptor of the active site. Lys-177 provides a ligand contact to substrate. Mg(2+) is bound by residues Lys-201, Asp-203, and Glu-204. Lys-201 carries the post-translational modification N6-carboxylysine. The active-site Proton acceptor is the His-293. Positions 294, 326, and 378 each coordinate substrate.

The protein belongs to the RuBisCO large chain family. Type I subfamily. As to quaternary structure, heterohexadecamer of 8 large chains and 8 small chains; disulfide-linked. The disulfide link is formed within the large subunit homodimers. Mg(2+) serves as cofactor. The disulfide bond which can form in the large chain dimeric partners within the hexadecamer appears to be associated with oxidative stress and protein turnover.

Its subcellular location is the carboxysome. The enzyme catalyses 2 (2R)-3-phosphoglycerate + 2 H(+) = D-ribulose 1,5-bisphosphate + CO2 + H2O. It catalyses the reaction D-ribulose 1,5-bisphosphate + O2 = 2-phosphoglycolate + (2R)-3-phosphoglycerate + 2 H(+). In terms of biological role, ruBisCO catalyzes two reactions: the carboxylation of D-ribulose 1,5-bisphosphate, the primary event in carbon dioxide fixation, as well as the oxidative fragmentation of the pentose substrate in the photorespiration process. Both reactions occur simultaneously and in competition at the same active site. This Synechococcus sp protein is Ribulose bisphosphate carboxylase large chain.